The following is a 397-amino-acid chain: S-adenosylmethionine synthase (397 aa).

Position 17 (histidine 17) interacts with ATP. Aspartate 19 contributes to the Mg(2+) binding site. Residue glutamate 45 participates in K(+) binding. L-methionine is bound by residues glutamate 58 and glutamine 101. The interval 101–111 is flexible loop; that stretch reads QSPDIAQGVDK. ATP-binding positions include 176–178, 243–244, aspartate 252, 258–259, and lysine 279; these read DGK, RF, and RK. Aspartate 252 contacts L-methionine. Lysine 283 lines the L-methionine pocket.

The protein belongs to the AdoMet synthase family. In terms of assembly, homotetramer; dimer of dimers. Requires Mg(2+) as cofactor. K(+) is required as a cofactor.

It localises to the cytoplasm. It catalyses the reaction L-methionine + ATP + H2O = S-adenosyl-L-methionine + phosphate + diphosphate. It participates in amino-acid biosynthesis; S-adenosyl-L-methionine biosynthesis; S-adenosyl-L-methionine from L-methionine: step 1/1. In terms of biological role, catalyzes the formation of S-adenosylmethionine (AdoMet) from methionine and ATP. The overall synthetic reaction is composed of two sequential steps, AdoMet formation and the subsequent tripolyphosphate hydrolysis which occurs prior to release of AdoMet from the enzyme. This is S-adenosylmethionine synthase from Staphylococcus aureus (strain MRSA252).